Reading from the N-terminus, the 440-residue chain is Glutamate-1-semialdehyde 2,1-aminomutase (440 aa).

Lysine 271 is modified (N6-(pyridoxal phosphate)lysine).

Belongs to the class-III pyridoxal-phosphate-dependent aminotransferase family. HemL subfamily. As to quaternary structure, homodimer. It depends on pyridoxal 5'-phosphate as a cofactor.

It is found in the cytoplasm. The catalysed reaction is (S)-4-amino-5-oxopentanoate = 5-aminolevulinate. The protein operates within porphyrin-containing compound metabolism; protoporphyrin-IX biosynthesis; 5-aminolevulinate from L-glutamyl-tRNA(Glu): step 2/2. This chain is Glutamate-1-semialdehyde 2,1-aminomutase, found in Chlamydia pneumoniae (Chlamydophila pneumoniae).